Reading from the N-terminus, the 604-residue chain is Prostaglandin G/H synthase 2 (604 aa).

Residues 1 to 17 (MLARALLLCVALALGHA) form the signal peptide. Positions 18 to 55 (ANPCCSNPCQNRGVCMSVGFDQYQCDCTRTGFYGENCS) constitute an EGF-like domain. 4 disulfide bridges follow: cysteine 21–cysteine 32, cysteine 22–cysteine 145, cysteine 26–cysteine 42, and cysteine 44–cysteine 54. Asparagine 53 carries N-linked (GlcNAc...) asparagine glycosylation. Arginine 106 is a binding site for substrate. Asparagine 130 is a glycosylation site (N-linked (GlcNAc...) asparagine). The active-site Proton acceptor is histidine 193. Substrate is bound at residue tyrosine 341. Residue tyrosine 371 is the For cyclooxygenase activity of the active site. Histidine 374 is a binding site for heme b. An N-linked (GlcNAc...) asparagine glycan is attached at asparagine 396. Cysteine 526 is subject to S-nitrosocysteine. Cysteines 555 and 561 form a disulfide. The N-linked (GlcNAc...) asparagine glycan is linked to asparagine 580.

The protein belongs to the prostaglandin G/H synthase family. Homodimer. Heme b serves as cofactor. Post-translationally, S-nitrosylation by NOS2 (iNOS) activates enzyme activity. S-nitrosylation may take place on different Cys residues in addition to Cys-526.

It localises to the microsome membrane. It is found in the endoplasmic reticulum membrane. Its subcellular location is the nucleus inner membrane. The protein resides in the nucleus outer membrane. It carries out the reaction (5Z,8Z,11Z,14Z)-eicosatetraenoate + AH2 + 2 O2 = prostaglandin H2 + A + H2O. It catalyses the reaction (5Z,8Z,11Z,14Z)-eicosatetraenoate + 2 O2 = prostaglandin G2. The enzyme catalyses prostaglandin G2 + AH2 = prostaglandin H2 + A + H2O. The catalysed reaction is (5Z,8Z,11Z,14Z,17Z)-eicosapentaenoate + 2 O2 = prostaglandin G3. It carries out the reaction prostaglandin G3 + AH2 = prostaglandin H3 + A + H2O. It catalyses the reaction (8Z,11Z,14Z)-eicosatrienoate + 2 O2 = prostaglandin G1. The enzyme catalyses prostaglandin G1 + AH2 = prostaglandin H1 + A + H2O. The catalysed reaction is 2-(5Z,8Z,11Z,14Z)-eicosatetraenoyl-sn-glycero-3-phosphoethanolamine + 2 O2 = 2-(prostaglandin G2)-sn-glycero-3-phosphoethanolamine. It carries out the reaction 2-(prostaglandin G2)-sn-glycero-3-phosphoethanolamine + AH2 = 2-(prostaglandin H2)-sn-glycero-3-phosphoethanolamine + A + H2O. It catalyses the reaction 2-(5Z,8Z,11Z,14Z)-eicosatetraenoyl-sn-glycero-3-phosphocholine + 2 O2 = 2-(prostaglandin G2)-sn-glycero-3-phosphocholine. The enzyme catalyses 2-(prostaglandin G2)-sn-glycero-3-phosphocholine + AH2 = 2-(prostaglandin H2)-sn-glycero-3-phosphocholine + A + H2O. The catalysed reaction is (15S)-hydroperoxy-(5Z,8Z,11Z,13E)-eicosatetraenoate + AH2 = (15S)-hydroxy-(5Z,8Z,11Z,13E)-eicosatetraenoate + A + H2O. It carries out the reaction 2-(5Z,8Z,11Z,14Z)-eicosatetraenoyl-sn-glycero-3-phosphocholine + AH2 + O2 = 2-[(15S)-hydroxy-(5Z,8Z,11Z,13E)-eicosatetraenoyl]-sn-glycero-3-phosphocholine + A + H2O. It catalyses the reaction 2-(5Z,8Z,11Z,14Z)-eicosatetraenoyl-sn-glycero-3-phosphocholine + AH2 + O2 = 2-[(15R)-hydroxy-(5Z,8Z,11Z,13E)-eicosatetraenoyl]-sn-glycero-3-phosphocholine + A + H2O. The enzyme catalyses 2-(5Z,8Z,11Z,14Z)-eicosatetraenoyl-sn-glycero-3-phosphocholine + AH2 + O2 = 2-[(11R)-hydroxy-(5Z,8Z,12E,14Z)-eicosatetraenoyl]-sn-glycero-3-phosphocholine + A + H2O. The catalysed reaction is (9Z,12Z)-octadecadienoate + AH2 + O2 = 9-hydroxy-(10E,12Z)-octadecadienoate + A + H2O. It carries out the reaction (9Z,12Z)-octadecadienoate + AH2 + O2 = 13-hydroxy-(9Z,11E)-octadecadienoate + A + H2O. It catalyses the reaction (5Z,8Z,11Z,14Z)-eicosatetraenoate + AH2 + O2 = (15R)-hydroxy-(5Z,8Z,11Z,13E)-eicosatetraenoate + A + H2O. The enzyme catalyses (5Z,8Z,11Z,14Z)-eicosatetraenoate + AH2 + O2 = (11R)-hydroxy-(5Z,8Z,12E,14Z)-eicosatetraenoate + A + H2O. The catalysed reaction is (5Z,8Z,11Z,14Z,17Z)-eicosapentaenoate + AH2 + O2 = (11R)-hydroxy-(5Z,8Z,12E,14Z,17Z)-eicosapentaenoate + A + H2O. It carries out the reaction (5Z,8Z,11Z,14Z,17Z)-eicosapentaenoate + AH2 + O2 = (18S)-hydroxy-(5Z,8Z,11Z,14Z,16E)-eicosapentaenoate + A + H2O. It catalyses the reaction (5Z,8Z,11Z,14Z,17Z)-eicosapentaenoate + AH2 + O2 = (18R)-hydroxy-(5Z,8Z,11Z,14Z,16E)-eicosapentaenoate + A + H2O. The enzyme catalyses (5Z,8Z,11Z,14Z,17Z)-eicosapentaenoate + AH2 + O2 = (15R)-hydroxy-(5Z,8Z,11Z,13E,17Z)-eicosapentaenoate + A + H2O. The catalysed reaction is (5Z,8Z,11Z,14Z,17Z)-eicosapentaenoate + AH2 + O2 = (15S)-hydroxy-(5Z,8Z,11Z,13E,17Z)-eicosapentaenoate + A + H2O. It carries out the reaction (7Z,10Z,13Z,16Z,19Z)-docosapentaenoate + AH2 + O2 = 13R-hydroxy-(7Z,10Z,14E,16Z,19Z)-docosapentaenoate + A + H2O. It catalyses the reaction (4Z,7Z,10Z,13Z,16Z,19Z)-docosahexaenoate + AH2 + O2 = 13-hydroxy-(4Z,7Z,10Z,14E,16Z,19Z)-docosahexaenoate + A + H2O. The enzyme catalyses (5S)-hydroxy-(6E,8Z,11Z,14Z)-eicosatetraenoate + AH2 + O2 = (5S,15R)-dihydroxy-(6E,8Z,11Z,13E)-eicosatetraenoate + A + H2O. The catalysed reaction is (4Z,7Z,10Z,13Z,16Z,19Z)-docosahexaenoate + AH2 + O2 = 17R-hydroxy-(4Z,7Z,10Z,13Z,15E,19Z)-docosahexaenoate + A + H2O. It carries out the reaction (5S)-hydroxy-(6E,8Z,11Z,14Z)-eicosatetraenoate + AH2 + O2 = (5S,15S)-dihydroxy-(6E,8Z,11Z,13E)-eicosatetraenoate + A + H2O. It catalyses the reaction (5S)-hydroxy-(6E,8Z,11Z,14Z)-eicosatetraenoate + AH2 + O2 = (5S,11R)-dihydroxy-(6E,8Z,12E,14Z)-eicosatetraenoate + A + H2O. The enzyme catalyses 2-(5Z,8Z,11Z,14Z-eicosatetraenoyl)-glycerol + 2 O2 = 2-glyceryl-prostaglandin G2. The catalysed reaction is 2-glyceryl-prostaglandin G2 + AH2 = 2-glyceryl-prostaglandin H2 + A + H2O. It carries out the reaction (5Z,8Z,11Z,14Z)-eicosatetraenoate + O2 = (15R)-hydroperoxy-(5Z,8Z,11Z,13E)-eicosatetraenoate. It catalyses the reaction (5Z,8Z,11Z,14Z)-eicosatetraenoate + O2 = 11R-hydroperoxy-(5Z,8Z,12E,14Z)-eicosatetraenoate. The enzyme catalyses (9Z,12Z)-octadecadienoate + AH2 + O2 = (9R)-hydroxy-(10E,12Z)-octadecadienoate + A + H2O. The catalysed reaction is (9Z,12Z)-octadecadienoate + AH2 + O2 = (9S)-hydroxy-(10E,12Z)-octadecadienoate + A + H2O. It carries out the reaction (9Z,12Z)-octadecadienoate + AH2 + O2 = (13S)-hydroxy-(9Z,11E)-octadecadienoate + A + H2O. It catalyses the reaction (9Z,12Z)-octadecadienoate + AH2 + O2 = (13R)-hydroxy-(9Z,11E)-octadecadienoate + A + H2O. Its pathway is lipid metabolism; prostaglandin biosynthesis. In terms of biological role, dual cyclooxygenase and peroxidase in the biosynthesis pathway of prostanoids, a class of C20 oxylipins mainly derived from arachidonate ((5Z,8Z,11Z,14Z)-eicosatetraenoate, AA, C20:4(n-6)), with a particular role in the inflammatory response. The cyclooxygenase activity oxygenates AA to the hydroperoxy endoperoxide prostaglandin G2 (PGG2), and the peroxidase activity reduces PGG2 to the hydroxy endoperoxide prostaglandin H2 (PGH2), the precursor of all 2-series prostaglandins and thromboxanes. This complex transformation is initiated by abstraction of hydrogen at carbon 13 (with S-stereochemistry), followed by insertion of molecular O2 to form the endoperoxide bridge between carbon 9 and 11 that defines prostaglandins. The insertion of a second molecule of O2 (bis-oxygenase activity) yields a hydroperoxy group in PGG2 that is then reduced to PGH2 by two electrons. Similarly catalyzes successive cyclooxygenation and peroxidation of dihomo-gamma-linoleate (DGLA, C20:3(n-6)) and eicosapentaenoate (EPA, C20:5(n-3)) to corresponding PGH1 and PGH3, the precursors of 1- and 3-series prostaglandins. In an alternative pathway of prostanoid biosynthesis, converts 2-arachidonoyl lysophopholipids to prostanoid lysophopholipids, which are then hydrolyzed by intracellular phospholipases to release free prostanoids. Metabolizes 2-arachidonoyl glycerol yielding the glyceryl ester of PGH2, a process that can contribute to pain response. Generates lipid mediators from n-3 and n-6 polyunsaturated fatty acids (PUFAs) via a lipoxygenase-type mechanism. Oxygenates PUFAs to hydroperoxy compounds and then reduces them to corresponding alcohols. Plays a role in the generation of resolution phase interaction products (resolvins) during both sterile and infectious inflammation. Metabolizes docosahexaenoate (DHA, C22:6(n-3)) to 17R-HDHA, a precursor of the D-series resolvins (RvDs). As a component of the biosynthetic pathway of E-series resolvins (RvEs), converts eicosapentaenoate (EPA, C20:5(n-3)) primarily to 18S-HEPE that is further metabolized by ALOX5 and LTA4H to generate 18S-RvE1 and 18S-RvE2. In vascular endothelial cells, converts docosapentaenoate (DPA, C22:5(n-3)) to 13R-HDPA, a precursor for 13-series resolvins (RvTs) shown to activate macrophage phagocytosis during bacterial infection. In activated leukocytes, contributes to oxygenation of hydroxyeicosatetraenoates (HETE) to diHETES (5,15-diHETE and 5,11-diHETE). Can also use linoleate (LA, (9Z,12Z)-octadecadienoate, C18:2(n-6)) as substrate and produce hydroxyoctadecadienoates (HODEs) in a regio- and stereospecific manner, being (9R)-HODE ((9R)-hydroxy-(10E,12Z)-octadecadienoate) and (13S)-HODE ((13S)-hydroxy-(9Z,11E)-octadecadienoate) its major products. During neuroinflammation, plays a role in neuronal secretion of specialized preresolving mediators (SPMs) 15R-lipoxin A4 that regulates phagocytic microglia. The sequence is that of Prostaglandin G/H synthase 2 (PTGS2) from Equus caballus (Horse).